We begin with the raw amino-acid sequence, 393 residues long: Acyl-homoserine-lactone synthase OpaM (393 aa).

It belongs to the LuxM / VanM family.

The catalysed reaction is a fatty acyl-[ACP] + S-adenosyl-L-methionine = an N-acyl-L-homoserine lactone + S-methyl-5'-thioadenosine + holo-[ACP] + H(+). This is Acyl-homoserine-lactone synthase OpaM (opaM) from Vibrio parahaemolyticus serotype O3:K6 (strain RIMD 2210633).